We begin with the raw amino-acid sequence, 393 residues long: MNDVFLKALPVLQKLTTAGFEAYFVGGSVRDYLLNRPISDVDIATSAFPEEVKEIFQSTYDTGIAHGTVTVRENKECYEVTTFRTEGTYEDFRRPSEVTFIRSLEEDLLRRDFTMNAIAMDENFKLHDPFSGQLAIQNKEIKAVGKASERFHEDALRMMRAVRFLSQLDFQLDKETETALTNQIALLQHTSVERITVEWIKMIKGQAVKRAIDLLLKVEMETYLPGFKGEKSALMEFASWNWEKRTTETAIWLGLVIAVKPSNITAFLKAWKLPNKTIQLVNKAYEAALNMKETWLTEELYHAQEAVFLLVNEINNIRGQSDKEDELKKAYELLPIHSKKDLAITGADLLKWTGENAGPWVKETLDKVECQVLLGKINNEKNQIKRWLGYHEE.

2 residues coordinate ATP: Gly-27 and Arg-30. CTP contacts are provided by Gly-27 and Arg-30. Mg(2+) contacts are provided by Asp-40 and Asp-42. 5 residues coordinate ATP: Arg-111, Asp-154, Arg-157, Arg-160, and Arg-163. The CTP site is built by Arg-111, Asp-154, Arg-157, Arg-160, and Arg-163.

Belongs to the tRNA nucleotidyltransferase/poly(A) polymerase family. Bacterial CCA-adding enzyme type 3 subfamily. As to quaternary structure, homodimer. It depends on Mg(2+) as a cofactor.

The enzyme catalyses a tRNA precursor + 2 CTP + ATP = a tRNA with a 3' CCA end + 3 diphosphate. It carries out the reaction a tRNA with a 3' CCA end + 2 CTP + ATP = a tRNA with a 3' CCACCA end + 3 diphosphate. Its function is as follows. Catalyzes the addition and repair of the essential 3'-terminal CCA sequence in tRNAs without using a nucleic acid template. Adds these three nucleotides in the order of C, C, and A to the tRNA nucleotide-73, using CTP and ATP as substrates and producing inorganic pyrophosphate. tRNA 3'-terminal CCA addition is required both for tRNA processing and repair. Also involved in tRNA surveillance by mediating tandem CCA addition to generate a CCACCA at the 3' terminus of unstable tRNAs. While stable tRNAs receive only 3'-terminal CCA, unstable tRNAs are marked with CCACCA and rapidly degraded. The protein is CCA-adding enzyme of Listeria innocua serovar 6a (strain ATCC BAA-680 / CLIP 11262).